A 239-amino-acid polypeptide reads, in one-letter code: Norbelladine 4'-O-methyltransferase 3 (239 aa).

S-adenosyl-L-methionine is bound by residues Val-55, Glu-77, 79–80, Ser-85, Asp-103, and Ala-132; that span reads GV. Asp-155 lines the a divalent metal cation pocket. Asp-157 provides a ligand contact to S-adenosyl-L-methionine. The a divalent metal cation site is built by Asp-181 and Asn-182.

This sequence belongs to the class I-like SAM-binding methyltransferase superfamily. Cation-dependent O-methyltransferase family. The cofactor is Mg(2+).

The catalysed reaction is norbelladine + S-adenosyl-L-methionine = 4'-O-methylnorbelladine + S-adenosyl-L-homocysteine + H(+). Its pathway is alkaloid biosynthesis. Its function is as follows. 4'-O-methyltransferase converting norbelladine to 4'-O-methylnorbelladine. 4'-O-methylnorbelladine is a precursor to all Amaryllidaceae alkaloids such as galanthamine, lycorine and haemanthamine, and including haemanthamine- and crinamine-type alkaloids, promising anticancer agents. The polypeptide is Norbelladine 4'-O-methyltransferase 3 (Narcissus aff. pseudonarcissus MK-2014 (Daffodil)).